The chain runs to 29 residues: Tail virion protein G7P (29 aa).

The chain crosses the membrane as a helical span at residues 8–28; sequence VVIALGLVISFGLGAITAGVL.

The protein belongs to the inovirus G7P protein family.

The protein resides in the virion. It localises to the host membrane. In terms of biological role, may initiate with G9P the virion concomitant assembly-budding process, by interacting with the packaging signal of the viral genome. The assembly-budding takes place at the host inner membrane. In turn, G7P and G9P are present at the end of the filamentous virion that emerges first from the bacterial host. The protein is Tail virion protein G7P (VII) of Escherichia coli (Bacteriophage I2-2).